The chain runs to 549 residues: Cytoplasmic trehalase (549 aa).

Substrate contacts are provided by residues arginine 168, tryptophan 175–aspartate 176, asparagine 212, arginine 221–glutamine 223, arginine 292–glutamate 294, and glycine 324. Catalysis depends on proton donor/acceptor residues aspartate 326 and glutamate 509. Glutamate 525 contacts substrate.

The protein belongs to the glycosyl hydrolase 37 family. In terms of assembly, monomer.

The protein localises to the cytoplasm. It catalyses the reaction alpha,alpha-trehalose + H2O = alpha-D-glucose + beta-D-glucose. The protein operates within glycan degradation; trehalose degradation; D-glucose from alpha,alpha-trehalose: step 1/1. Functionally, hydrolyzes trehalose to glucose. Could be involved, in cells returning to low osmolarity conditions, in the utilization of the accumulated cytoplasmic trehalose, which was synthesized in response to high osmolarity. This is Cytoplasmic trehalase from Shigella boydii serotype 4 (strain Sb227).